Here is a 468-residue protein sequence, read N- to C-terminus: RUS family member 1 (468 aa).

A2 carries the post-translational modification N-acetylalanine. Residue T49 is modified to Phosphothreonine. Residues 247 to 267 (LLMLPLVSGCPGFSLGCFFFL) form a helical membrane-spanning segment.

The protein belongs to the RUS1 family.

The protein localises to the membrane. In Pongo abelii (Sumatran orangutan), this protein is RUS family member 1 (Rusf1).